Reading from the N-terminus, the 265-residue chain is Glutamate racemase (265 aa).

Substrate-binding positions include 10-11 and 42-43; these read DS and YG. The active-site Proton donor/acceptor is the cysteine 73. 74–75 is a binding site for substrate; the sequence is NT. Cysteine 184 acts as the Proton donor/acceptor in catalysis. 185–186 lines the substrate pocket; sequence TH.

It belongs to the aspartate/glutamate racemases family.

The enzyme catalyses L-glutamate = D-glutamate. It functions in the pathway cell wall biogenesis; peptidoglycan biosynthesis. In terms of biological role, provides the (R)-glutamate required for cell wall biosynthesis. The sequence is that of Glutamate racemase from Pediococcus pentosaceus (strain ATCC 25745 / CCUG 21536 / LMG 10740 / 183-1w).